Reading from the N-terminus, the 140-residue chain is Fluoride-specific ion channel FluC 1 (140 aa).

4 helical membrane passes run 4 to 24 (LYLA…ASFI), 32 to 52 (FPLA…FILT), 70 to 90 (TGML…LHLL), and 99 to 119 (LLYL…GIFL). Na(+) contacts are provided by Gly-74 and Thr-77.

It belongs to the fluoride channel Fluc/FEX (TC 1.A.43) family.

The protein localises to the cell membrane. The enzyme catalyses fluoride(in) = fluoride(out). Its activity is regulated as follows. Na(+) is not transported, but it plays an essential structural role and its presence is essential for fluoride channel function. Functionally, fluoride-specific ion channel. Important for reducing fluoride concentration in the cell, thus reducing its toxicity. The protein is Fluoride-specific ion channel FluC 1 of Moorella thermoacetica (strain ATCC 39073 / JCM 9320).